A 258-amino-acid polypeptide reads, in one-letter code: Isoprenyl transferase 2 (258 aa).

D39 is a catalytic residue. A Mg(2+)-binding site is contributed by D39. Residues 40-43 (GNRR), W44, R52, H57, and 85-87 (SND) contribute to the substrate site. N88 functions as the Proton acceptor in the catalytic mechanism. Residues R92, R207, and 213 to 215 (RLS) each bind substrate. E226 provides a ligand contact to Mg(2+).

This sequence belongs to the UPP synthase family. As to quaternary structure, homodimer. The cofactor is Mg(2+).

Functionally, catalyzes the condensation of isopentenyl diphosphate (IPP) with allylic pyrophosphates generating different type of terpenoids. This is Isoprenyl transferase 2 from Tropheryma whipplei (strain Twist) (Whipple's bacillus).